A 337-amino-acid polypeptide reads, in one-letter code: MARHSFFCVDGHTCGNPVRLVAGGGPNLEGSTMMEKRAHFLREYDWIRTGLMFEPRGHDMMSGSILYPPTRPDCDVAVLFIETSGCLPMCGHGTIGTVTMAIEQGLVTPKTPGKLNLDTPAGLVAIEYEQNGQYVERVRLTNVPAFLYAEGLEVECPDLGNLKVDVAYGGNFYAIVEPQENYTDMEDYSALQLIAWSPILRERLNEKYKFQHPLLPDINRLSHILWTGKPKHPEAHARNAVFYGDKAIDRSPCGTGTSARMAQLAAKGKLKPGDEFVHESIIGSLFHGRVERATEVVGQDRTLPAIIPSIAGWARMTGYNTIFIDDRDPFAHGFTVA.

Catalysis depends on Cys-90, which acts as the Proton acceptor. Substrate contacts are provided by residues 91-92, His-223, and Asp-249; that span reads GH. The active-site Proton donor is Cys-253. 254–255 serves as a coordination point for substrate; that stretch reads GT.

It belongs to the proline racemase family.

The catalysed reaction is trans-4-hydroxy-L-proline = cis-4-hydroxy-D-proline. Its function is as follows. Catalyzes the epimerization of trans-4-hydroxy-L-proline (t4LHyp) to cis-4-hydroxy-D-proline (c4DHyp). Is likely involved in a degradation pathway that converts t4LHyp to alpha-ketoglutarate. Can also catalyze the epimerization of trans-3-hydroxy-L-proline (t3LHyp) to cis-3-hydroxy-D-proline (c3DHyp), albeit with 170-fold lower efficiency. Displays no proline racemase activity. The sequence is that of 4-hydroxyproline 2-epimerase 2 from Brucella anthropi (strain ATCC 49188 / DSM 6882 / CCUG 24695 / JCM 21032 / LMG 3331 / NBRC 15819 / NCTC 12168 / Alc 37) (Ochrobactrum anthropi).